Here is a 685-residue protein sequence, read N- to C-terminus: Phenoloxidase subunit 1 (685 aa).

Residues His209, His213, and His239 each coordinate Cu cation. Catalysis depends on Glu351, which acts as the Proton acceptor. His366, His370, and His406 together coordinate Cu cation. 2 disulfides stabilise this stretch: Cys580/Cys622 and Cys582/Cys629.

Heterodimer. Forms a complex with an interleukin 1-like protein as a consequence of a host defense response. It depends on Cu(2+) as a cofactor. The N-terminus is blocked. As to expression, synthesized by oenocytoids, a type of hemocyte, and released into the hemolymph plasma.

The protein localises to the secreted. The catalysed reaction is 2 L-dopa + O2 = 2 L-dopaquinone + 2 H2O. It carries out the reaction L-tyrosine + O2 = L-dopaquinone + H2O. With respect to regulation, activated by immulectin and lipopolysaccharide. Its function is as follows. This is a copper-containing oxidase that functions in the formation of pigments such as melanins and other polyphenolic compounds. Catalyzes the rate-limiting conversions of tyrosine to DOPA, DOPA to DOPA-quinone and possibly 5,6 dihydroxyindole to indole-5'6 quinone. Binds to the surface of hemocytes and is involved in hemocyte melanization. The polypeptide is Phenoloxidase subunit 1 (Manduca sexta (Tobacco hawkmoth)).